The following is a 505-amino-acid chain: Probable RNA exonuclease NGL3 (505 aa).

Disordered stretches follow at residues methionine 1–proline 75 and arginine 334–alanine 369. Residues serine 10–valine 23 show a composition bias toward polar residues. A compositionally biased stretch (basic and acidic residues) spans histidine 36 to glutamine 54. A Phosphoserine modification is found at serine 62. Residues glutamate 338 to aspartate 347 are compositionally biased toward acidic residues.

Belongs to the CCR4/nocturin family.

The protein is Probable RNA exonuclease NGL3 (NGL3) of Saccharomyces cerevisiae (strain ATCC 204508 / S288c) (Baker's yeast).